A 517-amino-acid polypeptide reads, in one-letter code: Maturase K (517 aa).

The protein belongs to the intron maturase 2 family. MatK subfamily.

Its subcellular location is the plastid. It is found in the chloroplast. Its function is as follows. Usually encoded in the trnK tRNA gene intron. Probably assists in splicing its own and other chloroplast group II introns. This Palhinhaea cernua (Nodding clubmoss) protein is Maturase K.